The primary structure comprises 381 residues: Sulfate adenylyltransferase (381 aa).

Belongs to the sulfate adenylyltransferase family.

The enzyme catalyses sulfate + ATP + H(+) = adenosine 5'-phosphosulfate + diphosphate. It participates in sulfur metabolism; hydrogen sulfide biosynthesis; sulfite from sulfate: step 1/3. The chain is Sulfate adenylyltransferase from Chloroflexus aurantiacus (strain ATCC 29366 / DSM 635 / J-10-fl).